We begin with the raw amino-acid sequence, 363 residues long: Phospho-N-acetylmuramoyl-pentapeptide-transferase (363 aa).

9 consecutive transmembrane segments (helical) span residues 13-33, 49-69, 95-115, 119-139, 154-174, 183-203, 224-244, 281-301, and 343-363; these read ISGI…AFFL, LPLL…IPLL, MGGI…SNFA, LAVS…DWQI, LALQ…NQPS, WVSF…FVLV, AIAL…LMVF, AVAL…IFFV, and ELQV…ICLA.

The protein belongs to the glycosyltransferase 4 family. MraY subfamily. The cofactor is Mg(2+).

The protein localises to the cell inner membrane. The catalysed reaction is UDP-N-acetyl-alpha-D-muramoyl-L-alanyl-gamma-D-glutamyl-meso-2,6-diaminopimeloyl-D-alanyl-D-alanine + di-trans,octa-cis-undecaprenyl phosphate = di-trans,octa-cis-undecaprenyl diphospho-N-acetyl-alpha-D-muramoyl-L-alanyl-D-glutamyl-meso-2,6-diaminopimeloyl-D-alanyl-D-alanine + UMP. It participates in cell wall biogenesis; peptidoglycan biosynthesis. Functionally, catalyzes the initial step of the lipid cycle reactions in the biosynthesis of the cell wall peptidoglycan: transfers peptidoglycan precursor phospho-MurNAc-pentapeptide from UDP-MurNAc-pentapeptide onto the lipid carrier undecaprenyl phosphate, yielding undecaprenyl-pyrophosphoryl-MurNAc-pentapeptide, known as lipid I. In Nostoc punctiforme (strain ATCC 29133 / PCC 73102), this protein is Phospho-N-acetylmuramoyl-pentapeptide-transferase.